The following is a 509-amino-acid chain: uncharacterized protein (509 aa).

The 123-residue stretch at 358–480 folds into the RNase NYN domain; sequence RRIVIIDAIS…IIPFIVENGE (123 aa).

This is an uncharacterized protein from Methanocaldococcus jannaschii (strain ATCC 43067 / DSM 2661 / JAL-1 / JCM 10045 / NBRC 100440) (Methanococcus jannaschii).